A 228-amino-acid polypeptide reads, in one-letter code: UPF0758 protein RALTA_A2508 (228 aa).

An MPN domain is found at 102-224 (GFDSPDSVRS…IRSLAESCER (123 aa)). Positions 173, 175, and 186 each coordinate Zn(2+). The short motif at 173–186 (HNHPRGTTAPSQSD) is the JAMM motif element.

Belongs to the UPF0758 family.

This is UPF0758 protein RALTA_A2508 from Cupriavidus taiwanensis (strain DSM 17343 / BCRC 17206 / CCUG 44338 / CIP 107171 / LMG 19424 / R1) (Ralstonia taiwanensis (strain LMG 19424)).